We begin with the raw amino-acid sequence, 233 residues long: Protein Atu3128 (233 aa).

Belongs to the glycosyl hydrolase 88 family.

In terms of biological role, seems to regulate the surface properties of the bacterium in the presence of plant cells or plant cell extracts. Mutations in this protein are responsible for an increased aggregation of the bacteria in the presence of pea root cap cells. This is Protein Atu3128 from Agrobacterium fabrum (strain C58 / ATCC 33970) (Agrobacterium tumefaciens (strain C58)).